A 541-amino-acid polypeptide reads, in one-letter code: MAVKYDLTQTLLPYLDRHLGLPLLSHLAGSGIFSETDIAKAQYELAKNTSMVDYALQLYEQAYPNQPAPAEIEKQRENAIALNDKLGSEVDHVLEVIQDPSVASALKQDKAQNLQWLEEKYNLTSEQINALYRYGYFQFSCGNYGDASSYLYHFRVLSTDPVLTMSSHWGKLASDILVGEWEQALSELKLLREQLDSSAAHVTASYAQPSTSNGSSQNDDLTQEGLLKKRAWLLHWALFIFFNHPGGREQLVEMFLSPVYLNTIQTTCWWLLRYVVAALLLSRRTTRVYLVQQPAPATLMASVSGANVNKLSPQQAIKDIVNIIDSESYRIAGTDPIVDFLSKLFVDFDFEAAQEQLTLAEQVASKDFFLADFKDELVEACRVVISEAYCRIHSKVDIADLVKRLNLSKEDGEKWIVNLVRDTRADAKIDFKEGMVFMNPTHPPVYQTIIEKTRGFTFRTSAMGTAIDRKAHPPSLNNTHNLNGNDKRGNAGGRGGRGGQRNQGGQRDRSHAHNNEAKREGESASAEEAQQQQPAQAIAAN.

The region spanning 252-443 is the PCI domain; it reads VEMFLSPVYL…GMVFMNPTHP (192 aa). The segment at 466–541 is disordered; sequence AIDRKAHPPS…QQPAQAIAAN (76 aa). The span at 490 to 502 shows a compositional bias: gly residues; sequence NAGGRGGRGGQRN. Residues 506 to 522 show a composition bias toward basic and acidic residues; it reads QRDRSHAHNNEAKREGE. Low complexity predominate over residues 523 to 541; that stretch reads SASAEEAQQQQPAQAIAAN.

Belongs to the eIF-3 subunit E family. In terms of assembly, component of the eukaryotic translation initiation factor 3 (eIF-3) complex.

It is found in the cytoplasm. Component of the eukaryotic translation initiation factor 3 (eIF-3) complex, which is involved in protein synthesis of a specialized repertoire of mRNAs and, together with other initiation factors, stimulates binding of mRNA and methionyl-tRNAi to the 40S ribosome. The eIF-3 complex specifically targets and initiates translation of a subset of mRNAs involved in cell proliferation. This Mycosarcoma maydis (Corn smut fungus) protein is Eukaryotic translation initiation factor 3 subunit E.